A 177-amino-acid polypeptide reads, in one-letter code: 3-hydroxydecanoyl-[acyl-carrier-protein] dehydratase (177 aa).

The active site involves His76.

The protein belongs to the thioester dehydratase family. FabA subfamily. In terms of assembly, homodimer.

It localises to the cytoplasm. It carries out the reaction a (3R)-hydroxyacyl-[ACP] = a (2E)-enoyl-[ACP] + H2O. The enzyme catalyses (3R)-hydroxydecanoyl-[ACP] = (2E)-decenoyl-[ACP] + H2O. It catalyses the reaction (2E)-decenoyl-[ACP] = (3Z)-decenoyl-[ACP]. It participates in lipid metabolism; fatty acid biosynthesis. Necessary for the introduction of cis unsaturation into fatty acids. Catalyzes the dehydration of (3R)-3-hydroxydecanoyl-ACP to E-(2)-decenoyl-ACP and then its isomerization to Z-(3)-decenoyl-ACP. Can catalyze the dehydratase reaction for beta-hydroxyacyl-ACPs with saturated chain lengths up to 16:0, being most active on intermediate chain length. The polypeptide is 3-hydroxydecanoyl-[acyl-carrier-protein] dehydratase (Mannheimia succiniciproducens (strain KCTC 0769BP / MBEL55E)).